We begin with the raw amino-acid sequence, 219 residues long: Trafficking protein particle complex subunit 4 (219 aa).

This sequence belongs to the TRAPP small subunits family. TRAPPC4 subfamily. In terms of assembly, component of the multisubunit TRAPP (transport protein particle) complex, which includes at least TRAPPC2, TRAPPC2L, TRAPPC3, TRAPPC3L, TRAPPC4, TRAPPC5, TRAPPC8, TRAPPC9, TRAPPC10, TRAPPC11 and TRAPPC12. Interacts with SDC2. In terms of tissue distribution, widely expressed.

The protein resides in the postsynaptic cell membrane. It is found in the golgi apparatus membrane. Its subcellular location is the endoplasmic reticulum. The protein localises to the vesicle. Functionally, core component of the TRAPP complexes which has a function of guanine nucleotide exchange factor activity for Rab1 GTPase. Plays a role in vesicular transport from endoplasmic reticulum to Golgi and autophagy. May play a role in dendrite postsynaptic membrane trafficking. The polypeptide is Trafficking protein particle complex subunit 4 (Mus musculus (Mouse)).